The sequence spans 329 residues: Vomeronasal type-1 receptor 43 (329 aa).

Residues 1–32 are Extracellular-facing; sequence MSKILFFSPCSLFSHTMNKNSRLHTNSNIGNT. A helical transmembrane segment spans residues 33-53; the sequence is FFSEIGIGITGNSFLLLYHIL. At 54-65 the chain is on the cytoplasmic side; the sequence is KFIRGHRPRLTD. A helical transmembrane segment spans residues 66-86; it reads LPIGLLSLIHLLMLLVAAFIA. At 87–109 the chain is on the extracellular side; sequence TDIFISRRGWDDIICKFLVYLYR. Residues Cys-101 and Cys-188 are joined by a disulfide bond. The chain crosses the membrane as a helical span at residues 110 to 130; that stretch reads VLRGLSLCTTSMLSVLQAIIL. The Cytoplasmic segment spans residues 131 to 147; the sequence is SPRSSCLSKFKHISLHH. The chain crosses the membrane as a helical span at residues 148 to 168; sequence ILCAILFLSVLYMLISSQLLV. Residues 169–209 are Extracellular-facing; it reads SIIATPNLTTNDLTYVTQSCSILPLSYLVESINSTLLAIRE. Asn-175 and Asn-201 each carry an N-linked (GlcNAc...) asparagine glycan. A helical transmembrane segment spans residues 210–230; that stretch reads YFLISLMFLSTWYIVALLCMH. The Cytoplasmic segment spans residues 231–255; that stretch reads RKQTQHLQETRLSLKKSPEQSATQT. A helical transmembrane segment spans residues 256–276; sequence ILMLMTFFVLMTIYDNIVSCL. At 277–285 the chain is on the extracellular side; it reads RTMLLNDPT. The helical transmembrane segment at 286–306 threads the bilayer; the sequence is SYSIELFMIHIYATVSPFVFM. Over 307 to 329 the chain is Cytoplasmic; that stretch reads SNEKHIVNFLRSMGKRMINLNLH.

The protein belongs to the G-protein coupled receptor 1 family.

The protein resides in the cell membrane. In terms of biological role, putative pheromone receptor implicated in the regulation of social and reproductive behavior. In Mus musculus (Mouse), this protein is Vomeronasal type-1 receptor 43 (Vmn1r43).